Consider the following 487-residue polypeptide: Histamine H1 receptor (487 aa).

At 1–29 (MSLPNSSCLLEDKMCESNKTTMASPQLMP) the chain is on the extracellular side. N-linked (GlcNAc...) asparagine glycans are attached at residues Asn5 and Asn18. A helical membrane pass occupies residues 30 to 50 (LVVVLSTICLVTVGLNLLVLY). The Cytoplasmic portion of the chain corresponds to 51 to 64 (AVRSERKLHTVGNL). Residues 65-89 (YIVSLSVADLIVGAVVMPMNILYLL) form a helical membrane-spanning segment. The Extracellular portion of the chain corresponds to 90–97 (MSKWSLGR). Residues 98–123 (PLCLFWLSMDYVASTASIFSVFILCI) form a helical membrane-spanning segment. A disulfide bond links Cys100 and Cys180. Residues Asp107 and Thr112 each contribute to the histamine site. The tract at residues 107 to 112 (DYVAST) is important for agonist binding. The Cytoplasmic segment spans residues 124–144 (DRYRSVQQPLRYLKYRTKTRA). A phosphothreonine mark is found at Thr140 and Thr142. Residues 145–164 (SATILGAWFLSFLWVIPILG) traverse the membrane as a helical segment. Over 165–188 (WNHFMQQTSVRREDKCETDFYDVT) the chain is Extracellular. A helical membrane pass occupies residues 189 to 211 (WFKVMTAIINFYLPTLLMLWFYA). Residue Asn198 participates in histamine binding. The Cytoplasmic segment spans residues 212 to 416 (KIYKAVRQHC…MNRERKAAKQ (205 aa)). A Phosphoserine modification is found at Ser230. A compositionally biased stretch (basic and acidic residues) spans 238 to 261 (KLRPENPKGDAKKPGKESPWEVLK). The segment at 238 to 292 (KLRPENPKGDAKKPGKESPWEVLKRKPKDAGGGSVLKSPSQTPKEMKSPVVFSQE) is disordered. Thr279 is modified (phosphothreonine). Phosphoserine is present on residues Ser344 and Ser347. A disordered region spans residues 345 to 377 (EISEDQMLGDSQSFSRTDSDTTTETASGKGKLR). Over residues 353–370 (GDSQSFSRTDSDTTTETA) the composition is skewed to polar residues. 3 positions are modified to phosphoserine: Ser380, Ser396, and Ser398. A helical transmembrane segment spans residues 417–440 (LGFIMAAFILCWIPYFIFFMVIAF). Positions 424–428 (FILCW) are important for agonist binding. Tyr431 contributes to the histamine binding site. Cysteines 441 and 444 form a disulfide. Residues 441-446 (CKNCCN) are Extracellular-facing. Residues 447-469 (EHLHMFTIWLGYINSTLNPLIYP) traverse the membrane as a helical segment. At 470 to 487 (LCNENFKKTFKRILHIRS) the chain is on the cytoplasmic side.

The protein belongs to the G-protein coupled receptor 1 family. Phosphorylation at sites in the second and third cytoplasmic loops independently contribute to agonist-induced receptor down-regulation.

The protein resides in the cell membrane. In terms of biological role, G-protein-coupled receptor for histamine, a biogenic amine that functions as an immune modulator and a neurotransmitter. Through the H1 receptor, histamine mediates the contraction of smooth muscles and increases capillary permeability due to contraction of terminal venules. Also mediates neurotransmission in the central nervous system and thereby regulates circadian rhythms, emotional and locomotor activities as well as cognitive functions. This chain is Histamine H1 receptor, found in Gorilla gorilla gorilla (Western lowland gorilla).